The chain runs to 1027 residues: Sodium/potassium-transporting ATPase subunit alpha-1 (1027 aa).

Residues 1-5 (MGVGD) constitute a propeptide that is removed on maturation. Residues 1 to 10 (MGVGDGRDQY) are compositionally biased toward basic and acidic residues. The disordered stretch occupies residues 1–39 (MGVGDGRDQYELAAMSEQSGKKKSKNKKEKKEKDMDELK). Topologically, residues 6-90 (GRDQYELAAM…NALTPPPTTP (85 aa)) are cytoplasmic. Ser-16 is subject to Phosphoserine; by PKC. Basic and acidic residues predominate over residues 29-39 (EKKEKDMDELK). The interaction with phosphoinositide-3 kinase stretch occupies residues 85-87 (PPP). The chain crosses the membrane as a helical span at residues 91–111 (EWVKFCKQMFGGFSMLLWTGA). Topologically, residues 112-134 (VLCFLAYGILAAMEDEPANDNLY) are extracellular. Residues 135–155 (LGVVLSAVVIITGCFSYYQDA) form a helical membrane-spanning segment. At 156-291 (KSSKIMDSFK…VGRTPISIEI (136 aa)) the chain is on the cytoplasmic side. The segment at 217–238 (DNSSLTGESEPQTRSPDFSNDN) is disordered. Residues 292-311 (EHFIHIITGVAVFLGVSFLL) form a helical membrane-spanning segment. Over 312 to 323 (LSLVLGYSWLEA) the chain is Extracellular. Residues 324–341 (VIFLIGIIVANVPEGLLA) traverse the membrane as a helical segment. Residues 342–776 (TVTVCLTLTA…EEGRLIFDNL (435 aa)) are Cytoplasmic-facing. Asp-379 (4-aspartylphosphate intermediate) is an active-site residue. Residue Lys-490 coordinates ATP. Mg(2+) is bound by residues Asp-721 and Asp-725. Residues 777 to 796 (KKSIAYTLTSNIPEITPFLF) traverse the membrane as a helical segment. The Extracellular portion of the chain corresponds to 797–806 (FIIANIPLPL). The chain crosses the membrane as a helical span at residues 807–827 (GTVTILCIDLGTDMLPAISLA). Topologically, residues 828–847 (YEAAESDIMKRQPRNPKTDK) are cytoplasmic. Residues 848–870 (LVNERLISIAYGQIGMIQALAGF) form a helical membrane-spanning segment. Residues 871–922 (FTYFVILAENGFLPPRLLGIRMNWDDKYINDLEDSYGQQWTYEQRKIVEFTC) lie on the Extracellular side of the membrane. Residues 923–942 (HTAFFTSIVIVQWADLIICK) traverse the membrane as a helical segment. Topologically, residues 943 to 955 (TRRNSVFQQGMKN) are cytoplasmic. Position 947 is a phosphoserine; by PKA (Ser-947). The chain crosses the membrane as a helical span at residues 956 to 974 (KILIFGLFEETALAAFLSY). The Extracellular portion of the chain corresponds to 975 to 989 (CPGMDVALRMYPLKP). Residues 990-1010 (NWWFCAFPYSLLIFIYDEIRK) form a helical membrane-spanning segment. Topologically, residues 1011 to 1027 (LILRRNPGGWMERETYY) are cytoplasmic.

Belongs to the cation transport ATPase (P-type) (TC 3.A.3) family. Type IIC subfamily. The sodium/potassium-transporting ATPase is composed of a catalytic alpha subunit, an auxiliary non-catalytic beta subunit and an additional regulatory subunit.

The protein localises to the cell membrane. The protein resides in the sarcolemma. The enzyme catalyses K(+)(out) + Na(+)(in) + ATP + H2O = K(+)(in) + Na(+)(out) + ADP + phosphate + H(+). In terms of biological role, this is the catalytic component of the active enzyme, which catalyzes the hydrolysis of ATP coupled with the exchange of sodium and potassium ions across the plasma membrane. This action creates the electrochemical gradient of sodium and potassium ions, providing the energy for active transport of various nutrients. The chain is Sodium/potassium-transporting ATPase subunit alpha-1 (atp1a1) from Catostomus commersonii (White sucker).